A 921-amino-acid polypeptide reads, in one-letter code: TRPM8 channel-associated factor 1 (921 aa).

The region spanning 542 to 841 (YCWMSTGLYI…TYLQLQEAFG (300 aa)) is the Peptidase M60 domain.

It belongs to the TCAF family. In terms of assembly, interacts with TRPM8 (via N-terminus and C-terminus domains); the interaction inhibits TRPM8 channel activity. Interacts with TRPV6.

Its subcellular location is the cell membrane. In terms of biological role, positively regulates the plasma membrane cation channel TRPM8 activity. Involved in the recruitment of TRPM8 to the cell surface. Promotes prostate cancer cell migration inhibition in a TRPM8-dependent manner. This is TRPM8 channel-associated factor 1 from Pongo abelii (Sumatran orangutan).